A 181-amino-acid polypeptide reads, in one-letter code: Nucleoside-triphosphatase THEP1 (181 aa).

Residues G12–S19 and V104–G111 contribute to the ATP site.

This sequence belongs to the THEP1 NTPase family.

The enzyme catalyses a ribonucleoside 5'-triphosphate + H2O = a ribonucleoside 5'-diphosphate + phosphate + H(+). Functionally, has nucleotide phosphatase activity towards ATP, GTP, CTP, TTP and UTP. May hydrolyze nucleoside diphosphates with lower efficiency. The polypeptide is Nucleoside-triphosphatase THEP1 (Thermoplasma acidophilum (strain ATCC 25905 / DSM 1728 / JCM 9062 / NBRC 15155 / AMRC-C165)).